Reading from the N-terminus, the 538-residue chain is Phosphoenolpyruvate carboxykinase (ATP) (538 aa).

3 residues coordinate substrate: Arg62, Tyr203, and Lys209. ATP-binding positions include Lys209, His228, and 244–252 (GLSGTGKTT). Mn(2+) contacts are provided by Lys209 and His228. Asp265 serves as a coordination point for Mn(2+). Residues Glu293, Arg329, 445–446 (RI), and Thr451 each bind ATP. Residue Arg329 participates in substrate binding.

It belongs to the phosphoenolpyruvate carboxykinase (ATP) family. In terms of assembly, monomer. Mn(2+) is required as a cofactor.

Its subcellular location is the cytoplasm. The enzyme catalyses oxaloacetate + ATP = phosphoenolpyruvate + ADP + CO2. Its pathway is carbohydrate biosynthesis; gluconeogenesis. Involved in the gluconeogenesis. Catalyzes the conversion of oxaloacetate (OAA) to phosphoenolpyruvate (PEP) through direct phosphoryl transfer between the nucleoside triphosphate and OAA. The polypeptide is Phosphoenolpyruvate carboxykinase (ATP) (Haemophilus ducreyi (strain 35000HP / ATCC 700724)).